We begin with the raw amino-acid sequence, 720 residues long: Engulfment and cell motility protein 3 (720 aa).

The ELMO domain maps to 307–479 (EQREQLQALR…VVREQLARTL (173 aa)). In terms of domain architecture, PH spans 541 to 663 (LRLCEGMLFR…WTDGLSALLG (123 aa)).

In terms of assembly, probably interacts directly with the SH3-domain of DOCK1 via its SH3-binding site. Part of a complex with DOCK1 and RAC1. Interacts with ADGRB3.

It is found in the cytoplasm. Involved in cytoskeletal rearrangements required for phagocytosis of apoptotic cells and cell motility. Acts in association with DOCK1 and CRK. Was initially proposed to be required in complex with DOCK1 to activate Rac Rho small GTPases. May enhance the guanine nucleotide exchange factor (GEF) activity of DOCK1. This chain is Engulfment and cell motility protein 3 (Elmo3), found in Rattus norvegicus (Rat).